We begin with the raw amino-acid sequence, 385 residues long: UDP-N-acetylglucosamine--N-acetylmuramyl-(pentapeptide) pyrophosphoryl-undecaprenol N-acetylglucosamine transferase (385 aa).

UDP-N-acetyl-alpha-D-glucosamine contacts are provided by residues 11-13, N117, R160, S215, and Q317; that span reads TGG.

Belongs to the glycosyltransferase 28 family. MurG subfamily.

It localises to the cell inner membrane. The enzyme catalyses di-trans,octa-cis-undecaprenyl diphospho-N-acetyl-alpha-D-muramoyl-L-alanyl-D-glutamyl-meso-2,6-diaminopimeloyl-D-alanyl-D-alanine + UDP-N-acetyl-alpha-D-glucosamine = di-trans,octa-cis-undecaprenyl diphospho-[N-acetyl-alpha-D-glucosaminyl-(1-&gt;4)]-N-acetyl-alpha-D-muramoyl-L-alanyl-D-glutamyl-meso-2,6-diaminopimeloyl-D-alanyl-D-alanine + UDP + H(+). It functions in the pathway cell wall biogenesis; peptidoglycan biosynthesis. In terms of biological role, cell wall formation. Catalyzes the transfer of a GlcNAc subunit on undecaprenyl-pyrophosphoryl-MurNAc-pentapeptide (lipid intermediate I) to form undecaprenyl-pyrophosphoryl-MurNAc-(pentapeptide)GlcNAc (lipid intermediate II). This Rickettsia typhi (strain ATCC VR-144 / Wilmington) protein is UDP-N-acetylglucosamine--N-acetylmuramyl-(pentapeptide) pyrophosphoryl-undecaprenol N-acetylglucosamine transferase.